A 276-amino-acid polypeptide reads, in one-letter code: Dermonecrotic toxin LsaSicTox-alphaIB2i (276 aa).

Histidine 5 is a catalytic residue. Positions 25 and 27 each coordinate Mg(2+). The Nucleophile role is filled by histidine 41. Intrachain disulfides connect cysteine 45-cysteine 51 and cysteine 47-cysteine 190. Aspartate 85 lines the Mg(2+) pocket. Residues asparagine 129 and asparagine 253 are each glycosylated (N-linked (GlcNAc...) asparagine).

The protein belongs to the arthropod phospholipase D family. Class II subfamily. Mg(2+) serves as cofactor. As to expression, expressed by the venom gland.

The protein localises to the secreted. It carries out the reaction an N-(acyl)-sphingosylphosphocholine = an N-(acyl)-sphingosyl-1,3-cyclic phosphate + choline. The catalysed reaction is an N-(acyl)-sphingosylphosphoethanolamine = an N-(acyl)-sphingosyl-1,3-cyclic phosphate + ethanolamine. The enzyme catalyses a 1-acyl-sn-glycero-3-phosphocholine = a 1-acyl-sn-glycero-2,3-cyclic phosphate + choline. It catalyses the reaction a 1-acyl-sn-glycero-3-phosphoethanolamine = a 1-acyl-sn-glycero-2,3-cyclic phosphate + ethanolamine. Functionally, dermonecrotic toxins cleave the phosphodiester linkage between the phosphate and headgroup of certain phospholipids (sphingolipid and lysolipid substrates), forming an alcohol (often choline) and a cyclic phosphate. This toxin acts on sphingomyelin (SM). It may also act on ceramide phosphoethanolamine (CPE), lysophosphatidylcholine (LPC) and lysophosphatidylethanolamine (LPE), but not on lysophosphatidylserine (LPS), and lysophosphatidylglycerol (LPG). It acts by transphosphatidylation, releasing exclusively cyclic phosphate products as second products. Induces dermonecrosis, hemolysis, increased vascular permeability, edema, inflammatory response, and platelet aggregation. In Loxosceles sabina (Tucson recluse spider), this protein is Dermonecrotic toxin LsaSicTox-alphaIB2i.